We begin with the raw amino-acid sequence, 95 residues long: Large ribosomal subunit protein bL25 (95 aa).

This sequence belongs to the bacterial ribosomal protein bL25 family. As to quaternary structure, part of the 50S ribosomal subunit; part of the 5S rRNA/L5/L18/L25 subcomplex. Contacts the 5S rRNA. Binds to the 5S rRNA independently of L5 and L18.

Its function is as follows. This is one of the proteins that binds to the 5S RNA in the ribosome where it forms part of the central protuberance. The protein is Large ribosomal subunit protein bL25 of Buchnera aphidicola subsp. Acyrthosiphon pisum (strain 5A).